The following is a 478-amino-acid chain: Cytochrome c-552 (478 aa).

The signal sequence occupies residues 1–26 (MARKTLRARRFFSLIFPFFFITSVYA). H94 lines the heme c pocket. 3 residues coordinate heme: C122, C125, and K126. The heme c site is built by C160, C163, H164, C209, C212, and H213. Residues E215, Y216, K261, and Q263 each coordinate Ca(2+). Y216 is a binding site for substrate. H264 is a binding site for substrate. Residues H275, C282, C285, H286, H301, C314, C317, H318, and H393 each coordinate heme c.

Belongs to the cytochrome c-552 family. Ca(2+) is required as a cofactor. The cofactor is heme c.

It is found in the periplasm. It catalyses the reaction 6 Fe(III)-[cytochrome c] + NH4(+) + 2 H2O = 6 Fe(II)-[cytochrome c] + nitrite + 8 H(+). Its pathway is nitrogen metabolism; nitrate reduction (assimilation). In terms of biological role, catalyzes the reduction of nitrite to ammonia, consuming six electrons in the process. In Salmonella paratyphi C (strain RKS4594), this protein is Cytochrome c-552.